Reading from the N-terminus, the 688-residue chain is Methionine--tRNA ligase (688 aa).

Positions 13 to 23 (PYANGNFHIGH) match the 'HIGH' region motif. Residues Cys144, Cys147, Cys157, and Cys160 each coordinate Zn(2+). The short motif at 342–346 (KMSKS) is the 'KMSKS' region element. Lys345 contacts ATP. The tRNA-binding domain maps to 582-688 (DFAKVDLRIA…PGAQPGMRIH (107 aa)).

The protein belongs to the class-I aminoacyl-tRNA synthetase family. MetG type 1 subfamily. In terms of assembly, homodimer. The cofactor is Zn(2+).

It localises to the cytoplasm. It catalyses the reaction tRNA(Met) + L-methionine + ATP = L-methionyl-tRNA(Met) + AMP + diphosphate. Functionally, is required not only for elongation of protein synthesis but also for the initiation of all mRNA translation through initiator tRNA(fMet) aminoacylation. The chain is Methionine--tRNA ligase from Acidovorax ebreus (strain TPSY) (Diaphorobacter sp. (strain TPSY)).